Here is a 426-residue protein sequence, read N- to C-terminus: Target of rapamycin complex 2 subunit AVO2 (426 aa).

ANK repeat units follow at residues 4–33 (EPSV…DLLT), 39–68 (NGWS…DKHE), 74–104 (KGNT…FINH), 108–137 (NGRA…DLWV), and 141–171 (NGDT…SLDD). Residues 259–302 (STHTTSGNGGNRRSSITNPVFNPRKPTLSTDSFSSSSNSSSRLR) are disordered. A compositionally biased stretch (polar residues) spans 260–278 (THTTSGNGGNRRSSITNPV). Low complexity predominate over residues 285–302 (TLSTDSFSSSSNSSSRLR). Ser315 and Ser350 each carry phosphoserine. Positions 350 to 359 (SNDNVRGDSQ) are enriched in polar residues. The disordered stretch occupies residues 350–392 (SNDNVRGDSQTATINDDGGGGNGGDATIGMGLRKDPDDENENK). Residues 366 to 375 (DGGGGNGGDA) are compositionally biased toward gly residues. Basic and acidic residues predominate over residues 381 to 392 (LRKDPDDENENK).

In terms of assembly, the target of rapamycin complex 2 (TORC2) is composed of at least AVO1, AVO2, BIT61, LST8, TOR2 and TSC11. TORC2 forms a homodimer. Contrary to TORC1, TORC2 does not bind to and is not sensitive to FKBP-rapamycin. AVO2 is peripherally associated to AVO1 and TSC11.

Its subcellular location is the cell membrane. It is found in the vacuole membrane. In terms of biological role, component of TORC2, which regulates cell cycle-dependent polarization of the actin-cytoskeleton and cell wall integrity. TORC2 controls polarity of the actin cytoskeleton, which is required for orienting the secretory pathway toward discrete growth sites, via the RHO1/PKC1/MAPK cell integrity pathway. This Saccharomyces cerevisiae (strain ATCC 204508 / S288c) (Baker's yeast) protein is Target of rapamycin complex 2 subunit AVO2 (AVO2).